The chain runs to 228 residues: Putative adhesin RBE_1271 (228 aa).

Positions 1 to 22 (MKKLLLIAATSATVLSSALSFA) are cleaved as a signal peptide.

The protein is Putative adhesin RBE_1271 of Rickettsia bellii (strain RML369-C).